The following is a 323-amino-acid chain: 1-aminocyclopropane-1-carboxylate oxidase 4 (323 aa).

Position 1 is an N-acetylmethionine (Met1). Residues 153 to 254 (PTFGTKVSNY…RMSIASFYNP (102 aa)) enclose the Fe2OG dioxygenase domain. 3 residues coordinate Fe cation: His177, Asp179, and His234. Arg245 lines the 2-oxoglutarate pocket.

Belongs to the iron/ascorbate-dependent oxidoreductase family. The cofactor is Fe cation. Expressed in vegetative tissues. Expressed constitutively at a low level in leaves and blades.

It carries out the reaction 1-aminocyclopropane-1-carboxylate + L-ascorbate + O2 = ethene + L-dehydroascorbate + hydrogen cyanide + CO2 + 2 H2O. It participates in alkene biosynthesis; ethylene biosynthesis via S-adenosyl-L-methionine; ethylene from S-adenosyl-L-methionine: step 2/2. Its function is as follows. Enzyme involved in the ethylene biosynthesis. May promote stem elongation by maximizing the extensibility cells, possibly by activating ethylene biosynthesis, in response to very-long-chain fatty acids (VLCFAs C20:0 to C30:0). In Arabidopsis thaliana (Mouse-ear cress), this protein is 1-aminocyclopropane-1-carboxylate oxidase 4 (ACO4).